Consider the following 360-residue polypeptide: Phospho-N-acetylmuramoyl-pentapeptide-transferase (360 aa).

Transmembrane regions (helical) follow at residues 25 to 45, 73 to 93, 97 to 117, 132 to 152, 168 to 188, 199 to 219, 236 to 256, 263 to 283, 288 to 308, and 338 to 358; these read RGILGVLTALSLALCLGPWMI, TMGGALILSAIGISTLLWADL, YVWVVLLVTLAFGAIGWVDDY, WKYFWQSVFGLGAAIFLYMTA, VSIPLGIGFVVLTYFVIVGSS, GLAIMPTVMVGGALGIFCYLS, AGELIVFCGALIGAGLGFLWF, VFMGDVGALALGAALGTIAVI, IVLFIMGGVFVMETLSVVIQV, and VIVRFWIITVILVLIGLATLK.

Belongs to the glycosyltransferase 4 family. MraY subfamily. Mg(2+) serves as cofactor.

It localises to the cell inner membrane. The enzyme catalyses UDP-N-acetyl-alpha-D-muramoyl-L-alanyl-gamma-D-glutamyl-meso-2,6-diaminopimeloyl-D-alanyl-D-alanine + di-trans,octa-cis-undecaprenyl phosphate = di-trans,octa-cis-undecaprenyl diphospho-N-acetyl-alpha-D-muramoyl-L-alanyl-D-glutamyl-meso-2,6-diaminopimeloyl-D-alanyl-D-alanine + UMP. It participates in cell wall biogenesis; peptidoglycan biosynthesis. Catalyzes the initial step of the lipid cycle reactions in the biosynthesis of the cell wall peptidoglycan: transfers peptidoglycan precursor phospho-MurNAc-pentapeptide from UDP-MurNAc-pentapeptide onto the lipid carrier undecaprenyl phosphate, yielding undecaprenyl-pyrophosphoryl-MurNAc-pentapeptide, known as lipid I. In Pseudomonas fluorescens (strain ATCC BAA-477 / NRRL B-23932 / Pf-5), this protein is Phospho-N-acetylmuramoyl-pentapeptide-transferase.